The sequence spans 452 residues: Pup--protein ligase (452 aa).

Mg(2+) is bound at residue E9. Residue R53 coordinates ATP. Y55 contributes to the Mg(2+) binding site. D57 (proton acceptor) is an active-site residue. Position 63 (E63) interacts with Mg(2+). T66 and W419 together coordinate ATP.

The protein belongs to the Pup ligase/Pup deamidase family. Pup-conjugating enzyme subfamily.

It catalyses the reaction ATP + [prokaryotic ubiquitin-like protein]-L-glutamate + [protein]-L-lysine = ADP + phosphate + N(6)-([prokaryotic ubiquitin-like protein]-gamma-L-glutamyl)-[protein]-L-lysine.. Its pathway is protein degradation; proteasomal Pup-dependent pathway. The protein operates within protein modification; protein pupylation. Its function is as follows. Catalyzes the covalent attachment of the prokaryotic ubiquitin-like protein modifier Pup to the proteasomal substrate proteins, thereby targeting them for proteasomal degradation. This tagging system is termed pupylation. The ligation reaction involves the side-chain carboxylate of the C-terminal glutamate of Pup and the side-chain amino group of a substrate lysine. The sequence is that of Pup--protein ligase from Gordonia bronchialis (strain ATCC 25592 / DSM 43247 / BCRC 13721 / JCM 3198 / KCTC 3076 / NBRC 16047 / NCTC 10667) (Rhodococcus bronchialis).